A 550-amino-acid polypeptide reads, in one-letter code: Transcription factor p65 (550 aa).

The residue at position 1 (M1) is an N-acetylmethionine. In terms of domain architecture, RHD spans 16-190 (ASGPYVEIIE…HPIFDNRAPN (175 aa)). Residue K37 forms a Glycyl lysine isopeptide (Lys-Gly) (interchain with G-Cter in SUMO3) linkage. C38 is modified (cysteine persulfide; alternate). The residue at position 38 (C38) is an S-nitrosocysteine; alternate. N6-acetyllysine is present on residues K122, K123, K218, and K221. Residues K122 and K123 each participate in a glycyl lysine isopeptide (Lys-Gly) (interchain with G-Cter in SUMO3); alternate cross-link. Position 254 is a phosphothreonine (T254). Phosphoserine occurs at positions 276 and 281. Positions 301–304 (KRKR) match the Nuclear localization signal motif. K310 carries the N6-acetyllysine; alternate modification. K310 bears the N6-methyllysine mark. S311 is modified (phosphoserine). 2 transcriptional activation domain regions span residues 342-388 (PKPA…APVL) and 414-476 (PGPP…EFQQ). T434 carries the post-translational modification Phosphothreonine. S468 carries the post-translational modification Phosphoserine. The residue at position 505 (T505) is a Phosphothreonine. The interval 520–550 (TSGLPNGLSGDEDFSSIADMDFSALLSQISS) is transcriptional activation domain 2. The residue at position 535 (S535) is a Phosphoserine. Residues 535-543 (SIADMDFSA) carry the 9aaTAD motif.

Component of the NF-kappa-B p65-p50 complex. Component of the NF-kappa-B p65-c-Rel complex. Homodimer; component of the NF-kappa-B p65-p65 complex. Component of the NF-kappa-B p65-p52 complex. May interact with ETHE1. Binds TLE5 and TLE1. Interacts with TP53BP2. Binds to and is phosphorylated by the activated form of either RPS6KA4 or RPS6KA5. Interacts with ING4 and this interaction may be indirect. Interacts with CARM1, USP48 and UNC5CL. Interacts with IRAK1BP1. Interacts with NFKBID. Interacts with NFKBIA. Interacts with GSK3B. Interacts with NFKBIB. Interacts with NFKBIE. Interacts with NFKBIZ. Interacts with EHMT1 (via ANK repeats). Part of a 70-90 kDa complex at least consisting of CHUK, IKBKB, NFKBIA, RELA, ELP1 and MAP3K14. Interacts with HDAC3; HDAC3 mediates the deacetylation of RELA. Interacts with HDAC1; the interaction requires non-phosphorylated RELA. Interacts with CBP; the interaction requires phosphorylated RELA. Interacts (phosphorylated at 'Thr-254') with PIN1; the interaction inhibits p65 binding to NFKBIA. Interacts with SOCS1. Interacts with UXT. Interacts with MTDH and PHF11. Interacts with ARRB2. Interacts with NFKBIA (when phosphorylated), the interaction is direct; phosphorylated NFKBIA is part of a SCF(BTRC)-like complex lacking CUL1. Interacts with RNF25. Interacts (via C-terminus) with DDX1. Interacts with UFL1 and COMMD1. Interacts with BRMS1; this promotes deacetylation of 'Lys-310'. Interacts with NOTCH2. Directly interacts with MEN1; this interaction represses NFKB-mediated transactivation. Interacts with AKIP1, which promotes the phosphorylation and nuclear retention of RELA. Interacts (via the RHD) with GFI1; the interaction, after bacterial lipopolysaccharide (LPS) stimulation, inhibits the transcriptional activity by interfering with the DNA-binding activity to target gene promoter DNA. Interacts (when acetylated at Lys-310) with BRD4; leading to activation of the NF-kappa-B pathway. Interacts with MEFV. Interacts with CLOCK. Interacts (via N-terminus) with CPEN1; this interaction induces proteolytic cleavage of p65/RELA subunit and inhibition of NF-kappa-B transcriptional activity. Interacts with FOXP3. Interacts with CDK5RAP3; stimulates the interaction of RELA with HDAC1, HDAC2 and HDAC3 thereby inhibiting NF-kappa-B transcriptional activity. Interacts with DHX9; this interaction is direct and activates NF-kappa-B-mediated transcription. Interacts with LRRC25. Interacts with TBX21. Interacts with KAT2A. Interacts with ZBTB7A; involved in the control by RELA of the accessibility of target gene promoters. Directly interacts with DDX3X; this interaction may trap RELA in the cytoplasm, impairing nuclear relocalization upon TNF activating signals. Interacts with PHF2. Interacts with MKRN2; the interaction leads to its polyubiquitination and proteasome-dependent degradation. Interacts with ECSIT. Interacts with RAB28; the interaction contributes to RELA transport from cytoplasm to nucleus. In terms of processing, ubiquitinated by RNF182, leading to its proteasomal degradation. Degradation is required for termination of NF-kappa-B response. Polyubiquitinated via 'Lys-29'-linked ubiquitin; leading to lysosomal degradation. Post-translationally, monomethylated at Lys-310 by SETD6. Monomethylation at Lys-310 is recognized by the ANK repeats of EHMT1 and promotes the formation of repressed chromatin at target genes, leading to down-regulation of NF-kappa-B transcription factor activity. Phosphorylation at Ser-311 disrupts the interaction with EHMT1 without preventing monomethylation at Lys-310 and relieves the repression of target genes. Phosphorylation at Ser-311 disrupts the interaction with EHMT1 and promotes transcription factor activity. Phosphorylation on Ser-535 stimulates acetylation on Lys-310 and interaction with CBP; the phosphorylated and acetylated forms show enhanced transcriptional activity. Phosphorylation at Ser-276 by RPS6KA4 and RPS6KA5 promotes its transactivation and transcriptional activities. In terms of processing, phosphorylation at Ser-75 by herpes simplex virus 1/HHV-1 inhibits NF-kappa-B activation. Post-translationally, reversibly acetylated; the acetylation seems to be mediated by CBP, the deacetylation by HDAC3 and SIRT2. Acetylation at Lys-122 enhances DNA binding and impairs association with NFKBIA. Acetylation at Lys-310 is required for full transcriptional activity in the absence of effects on DNA binding and NFKBIA association. Acetylation at Lys-310 promotes interaction with BRD4. Acetylation can also lower DNA-binding and results in nuclear export. Interaction with BRMS1 promotes deacetylation of Lys-310. Lys-310 is deacetylated by SIRT2. S-nitrosylation of Cys-38 inactivates the enzyme activity. In terms of processing, sulfhydration at Cys-38 mediates the anti-apoptotic activity by promoting the interaction with RPS3 and activating the transcription factor activity. Post-translationally, sumoylation by PIAS3 negatively regulates DNA-bound activated NF-kappa-B. Proteolytically cleaved within a conserved N-terminus region required for base-specific contact with DNA in a CPEN1-mediated manner, and hence inhibits NF-kappa-B transcriptional activity.

The protein localises to the nucleus. It is found in the cytoplasm. Functionally, NF-kappa-B is a pleiotropic transcription factor present in almost all cell types and is the endpoint of a series of signal transduction events that are initiated by a vast array of stimuli related to many biological processes such as inflammation, immunity, differentiation, cell growth, tumorigenesis and apoptosis. NF-kappa-B is a homo- or heterodimeric complex formed by the Rel-like domain-containing proteins RELA/p65, RELB, NFKB1/p105, NFKB1/p50, REL and NFKB2/p52. The heterodimeric RELA-NFKB1 complex appears to be most abundant one. The dimers bind at kappa-B sites in the DNA of their target genes and the individual dimers have distinct preferences for different kappa-B sites that they can bind with distinguishable affinity and specificity. Different dimer combinations act as transcriptional activators or repressors, respectively. The NF-kappa-B heterodimeric RELA-NFKB1 and RELA-REL complexes, for instance, function as transcriptional activators. NF-kappa-B is controlled by various mechanisms of post-translational modification and subcellular compartmentalization as well as by interactions with other cofactors or corepressors. NF-kappa-B complexes are held in the cytoplasm in an inactive state complexed with members of the NF-kappa-B inhibitor (I-kappa-B) family. In a conventional activation pathway, I-kappa-B is phosphorylated by I-kappa-B kinases (IKKs) in response to different activators, subsequently degraded thus liberating the active NF-kappa-B complex which translocates to the nucleus. The inhibitory effect of I-kappa-B on NF-kappa-B through retention in the cytoplasm is exerted primarily through the interaction with RELA. RELA shows a weak DNA-binding site which could contribute directly to DNA binding in the NF-kappa-B complex. Besides its activity as a direct transcriptional activator, it is also able to modulate promoters accessibility to transcription factors and thereby indirectly regulate gene expression. Associates with chromatin at the NF-kappa-B promoter region via association with DDX1. Essential for cytokine gene expression in T-cells. The NF-kappa-B homodimeric RELA-RELA complex appears to be involved in invasin-mediated activation of IL-8 expression. Key transcription factor regulating the IFN response during SARS-CoV-2 infection. In Rattus norvegicus (Rat), this protein is Transcription factor p65.